Reading from the N-terminus, the 406-residue chain is NAC transcription factor NAM-B1 (406 aa).

Over residues 1 to 11 the composition is skewed to polar residues; sequence MGSPDSSSGSA. The tract at residues 1 to 40 is disordered; that stretch reads MGSPDSSSGSAQKPPRHQHQHQPPPPRRQGSAPELPPGFR. In terms of domain architecture, NAC spans 35 to 204; it reads LPPGFRFHPT…DWVLCRIYKK (170 aa). Residues 137–210 mediate DNA binding; it reads VGVKKALVFY…IYKKTSKAAA (74 aa).

The protein resides in the nucleus. Its function is as follows. Transcription factor of the NAC family associated with the grain protein content (GPC). Sequences of the 11 European varieties of H.vulgare tested belongs to the same haplotype while the sequence found in H.spontaneum, an ancestor of the cultivated H.vulgare which has a higher GPC, belongs to an other haplotype. This chain is NAC transcription factor NAM-B1 (NAM-B1), found in Hordeum vulgare subsp. spontaneum (Wild barley).